Reading from the N-terminus, the 152-residue chain is Nucleoside diphosphate kinase B (152 aa).

Residues 1–66 (MANLERTFIA…DRPFFPGLVK (66 aa)) form an interaction with AKAP13 region. ATP is bound by residues Lys-12, Phe-60, Arg-88, Thr-94, Arg-105, and Asn-115. Residue His-118 is the Pros-phosphohistidine intermediate of the active site.

This sequence belongs to the NDK family. As to quaternary structure, hexamer of two different chains: An and B (A6, A5B, A4B2, A3B3, A2B4, AB5, B6). Interacts with CAPN8. Interacts with AKAP13. Interacts with ITGB1BP1 (via C-terminal domain region). Interacts with BCL2L10. Mg(2+) serves as cofactor. In terms of tissue distribution, ubiquitously expressed.

Its subcellular location is the cytoplasm. The protein localises to the cell projection. It is found in the lamellipodium. It localises to the ruffle. The protein resides in the perinuclear region. Its subcellular location is the nucleus. It catalyses the reaction a 2'-deoxyribonucleoside 5'-diphosphate + ATP = a 2'-deoxyribonucleoside 5'-triphosphate + ADP. It carries out the reaction a ribonucleoside 5'-diphosphate + ATP = a ribonucleoside 5'-triphosphate + ADP. The catalysed reaction is ATP + protein L-histidine = ADP + protein N-phospho-L-histidine.. Major role in the synthesis of nucleoside triphosphates other than ATP. The ATP gamma phosphate is transferred to the NDP beta phosphate via a ping-pong mechanism, using a phosphorylated active-site intermediate. Negatively regulates Rho activity by interacting with AKAP13/LBC. Acts as a transcriptional activator of the MYC gene; binds DNA non-specifically. Binds to both single-stranded guanine- and cytosine-rich strands within the nuclease hypersensitive element (NHE) III(1) region of the MYC gene promoter. Does not bind to duplex NHE III(1). Has G-quadruplex (G4) DNA-binding activity, which is independent of its nucleotide-binding and kinase activity. Binds both folded and unfolded G4 with similar low nanomolar affinities. Stabilizes folded G4s regardless of whether they are prefolded or not. Exhibits histidine protein kinase activity. In Homo sapiens (Human), this protein is Nucleoside diphosphate kinase B (NME2).